A 445-amino-acid chain; its full sequence is tRNA(Ile)-lysidine synthase (445 aa).

Ser-19–Ser-24 serves as a coordination point for ATP.

It belongs to the tRNA(Ile)-lysidine synthase family.

The protein resides in the cytoplasm. The enzyme catalyses cytidine(34) in tRNA(Ile2) + L-lysine + ATP = lysidine(34) in tRNA(Ile2) + AMP + diphosphate + H(+). In terms of biological role, ligates lysine onto the cytidine present at position 34 of the AUA codon-specific tRNA(Ile) that contains the anticodon CAU, in an ATP-dependent manner. Cytidine is converted to lysidine, thus changing the amino acid specificity of the tRNA from methionine to isoleucine. The polypeptide is tRNA(Ile)-lysidine synthase (Buchnera aphidicola subsp. Schizaphis graminum (strain Sg)).